The following is a 310-amino-acid chain: tRNA pseudouridine synthase B (310 aa).

Residue aspartate 37 is the Nucleophile of the active site.

This sequence belongs to the pseudouridine synthase TruB family. Type 1 subfamily.

The catalysed reaction is uridine(55) in tRNA = pseudouridine(55) in tRNA. Functionally, responsible for synthesis of pseudouridine from uracil-55 in the psi GC loop of transfer RNAs. This Deinococcus deserti (strain DSM 17065 / CIP 109153 / LMG 22923 / VCD115) protein is tRNA pseudouridine synthase B.